A 274-amino-acid polypeptide reads, in one-letter code: Triosephosphate isomerase (274 aa).

Position 13–15 (13–15 (NWK)) interacts with substrate. The Electrophile role is filled by His-98. Catalysis depends on Glu-170, which acts as the Proton acceptor. The substrate site is built by Gly-176 and Ser-216.

The protein belongs to the triosephosphate isomerase family. As to quaternary structure, homodimer.

It localises to the cytoplasm. The enzyme catalyses D-glyceraldehyde 3-phosphate = dihydroxyacetone phosphate. It functions in the pathway carbohydrate biosynthesis; gluconeogenesis. Its pathway is carbohydrate degradation; glycolysis; D-glyceraldehyde 3-phosphate from glycerone phosphate: step 1/1. Its function is as follows. Involved in the gluconeogenesis. Catalyzes stereospecifically the conversion of dihydroxyacetone phosphate (DHAP) to D-glyceraldehyde-3-phosphate (G3P). The chain is Triosephosphate isomerase from Aster yellows witches'-broom phytoplasma (strain AYWB).